The sequence spans 108 residues: uncharacterized protein (108 aa).

A disordered region spans residues T81 to I108. The span at H83–Q99 shows a compositional bias: low complexity.

This is an uncharacterized protein from Dictyostelium discoideum (Social amoeba).